The sequence spans 576 residues: Sodium/hydrogen exchanger 8 (576 aa).

The next 11 membrane-spanning stretches (helical) occupy residues Met-55–Ile-75, Leu-79–Ile-99, Pro-118–His-138, Leu-151–Leu-171, Phe-186–Ala-206, Leu-256–Ile-276, Gly-306–Met-326, Val-349–Pro-369, Ile-374–Pro-394, Met-412–Leu-432, and Thr-446–Ile-466. Position 505 is a phosphothreonine (Thr-505). Phosphoserine occurs at positions 566 and 568.

Belongs to the monovalent cation:proton antiporter 1 (CPA1) transporter (TC 2.A.36) family. Predominantly expressed in the liver, skeletal muscle, kidney, and testis. Expressed in both renal cortex and medulla. Detected throughout the entire gastrointestinal tract, with high expression detected in stomach, duodenum and ascending colon. In gastric epithelium; expressed in the glands within the fundus and pylorus regions.

Its subcellular location is the golgi apparatus membrane. The protein localises to the golgi apparatus. The protein resides in the trans-Golgi network membrane. It localises to the endosome. It is found in the multivesicular body membrane. Its subcellular location is the apical cell membrane. The protein localises to the cytoplasmic vesicle. The protein resides in the secretory vesicle. It localises to the acrosome. It catalyses the reaction Na(+)(in) + H(+)(out) = Na(+)(out) + H(+)(in). In terms of biological role, na(+)/H(+) antiporter. Mediates the electoneutral exchange of intracellular H(+) ions for extracellular Na(+) in 1:1 stoichiometry. Acts as an Na(+)/H(+) exchanger in the trans-Golgi. Contributes to the regulation of pH regulation of Golgi apparatus, and consequently, in protein trafficking and endosomal morphology. Plays a crucial role in germ cells in acrosome biogenesis and sperm development, probably by playing a role in the fusion of the Golgi-derived vesicles that form the acrosomal cap. Can also be active at the cell surface of specialized cells. In the small intestine, plays a major physiological role in transepithelial absorption of Na(+). Regulates intracellular pH homeostasis of intestinal epithelial cells. Acts as an important regulator of mucosal integrity in the intestine and in the stomach, could mediate the pH fluctuation necessary for mucin exocytosis or assist membrane trafficking of other proteins. Plays a role in photoreceptor survival and in the maintenance of intracellular pH homeostasis in retinal pigment epithelium (RPE cells). The sequence is that of Sodium/hydrogen exchanger 8 (Slc9a8) from Mus musculus (Mouse).